We begin with the raw amino-acid sequence, 462 residues long: Na(+)/H(+) antiporter NhaA (462 aa).

11 helical membrane-spanning segments follow: residues 24–44 (ISGLIMLGFALAGLVLANLPL), 66–86 (LPIGHWAQDGLLTIFFLTVGL), 102–122 (AAAVPMLCAVGGMITPPILFL), 156–176 (GWAVPTATDIAFSLAVLALFA), 196–216 (LLAIILIAVFFSSVNAWYWFI), 235–255 (PWIAVGVVGILAWIMMFEAGI), 256–275 (HPTLAGVLVGLLTPARVMHG), 290–310 (PFSALLALPIFALFATGVHFE), 312–332 (MSPLLLLSPLVIALIVALVVG), 361–381 (MIPAAVACGIGFTVSFLIASL), and 392–412 (ARFGVLVASLIAAAISGVLLS).

This sequence belongs to the NhaA Na(+)/H(+) (TC 2.A.33) antiporter family.

Its subcellular location is the cell membrane. It catalyses the reaction Na(+)(in) + 2 H(+)(out) = Na(+)(out) + 2 H(+)(in). Na(+)/H(+) antiporter that extrudes sodium in exchange for external protons. This Bifidobacterium breve (strain NCIMB 8807 / UCC2003) protein is Na(+)/H(+) antiporter NhaA.